Here is a 912-residue protein sequence, read N- to C-terminus: Transcription factor bHLH140 (912 aa).

The segment at 1 to 57 (MDDFNLRSENPNSSSTTSSSSSSFHRHKSETGNTKRSRSTSTLSTDPQSVAARDRRH) is disordered. Residues 13-23 (SSSTTSSSSSS) show a composition bias toward low complexity. Positions 43–92 (LSTDPQSVAARDRRHRISDRFKILQSMVPGGAKMDTVSMLDEAISYVKFL) constitute a bHLH domain. 234–241 (GPPGSGKS) provides a ligand contact to ATP. One can recognise a Macro domain in the interval 511-690 (KAKASQKNID…KYKGSQDKAV (180 aa)). Residues 657 to 666 (PKRSSQTAVS) show a composition bias toward polar residues. Residues 657–706 (PKRSSQTAVSDSGEDIKEDSERNKKYKGSQDKAVTNNLESESLEDTRGSG) form a disordered region. The HIT domain occupies 720–829 (LHSIAMHPER…SQDFNSDSLK (110 aa)). A C2H2-type zinc finger spans residues 870–893 (LRCNRCRSAHPNIPKLKSHVRSCH).

Homodimer.

The protein resides in the nucleus. The sequence is that of Transcription factor bHLH140 (BHLH140) from Arabidopsis thaliana (Mouse-ear cress).